Reading from the N-terminus, the 250-residue chain is uncharacterized protein (250 aa).

A Glycyl lysine isopeptide (Lys-Gly) (interchain with G-Cter in ubiquitin) cross-link involves residue Lys17. Residues 30 to 67 are disordered; sequence REEDYVATSKDNIHHHPCDWSAKPSQRQNENEQKSTIR.

This is an uncharacterized protein from Saccharomyces cerevisiae (strain ATCC 204508 / S288c) (Baker's yeast).